Reading from the N-terminus, the 148-residue chain is Phage-like element PBSX protein XkdN (148 aa).

The protein to B.subtilis YqbN.

In Bacillus subtilis (strain 168), this protein is Phage-like element PBSX protein XkdN (xkdN).